Reading from the N-terminus, the 192-residue chain is I-Kappa-B like protein H1 (192 aa).

3 ANK repeats span residues 94 to 126 (KGAQ…DING), 131 to 161 (AGLT…DVKV), and 165 to 192 (GKET…SKKM).

The protein belongs to the polydnaviridae I-Kappa-B-like protein family.

Its function is as follows. Suppresses the host immune response through NF-kappa-B inactivation. Possesses ankyrin repeat domains required for NF-kappa-B binding but lacks the regulatory regions required for dissociation from NF-kappa-B and degradation. Therefore, prevents host NF-kappa-B release and subsequent activation. This is I-Kappa-B like protein H1 (H4) from Microplitis demolitor bracovirus (isolate Webb) (MdBV).